A 746-amino-acid polypeptide reads, in one-letter code: NAD(P)H-quinone oxidoreductase subunit 5, chloroplastic (746 aa).

16 consecutive transmembrane segments (helical) span residues 9–29 (WIIP…LLLF), 40–60 (WTFL…YLSI), 89–109 (IDPL…LVLI), 125–145 (FAYL…SNLI), 147–167 (VYFF…FWFT), 185–205 (GDFG…SFEF), 221–241 (VNLL…IAKS), 258–278 (TPIS…FLVA), 280–300 (LLPL…IGII), 327–347 (LGYM…FHLI), 354–374 (ALLF…VGYS), 396–416 (TAFL…WFWS), 425–445 (LLFS…TAFY), 547–567 (ILFP…IGIP), 608–628 (FSVS…KPFY), and 722–742 (FYLF…FFFY).

The protein belongs to the complex I subunit 5 family. As to quaternary structure, NDH is composed of at least 16 different subunits, 5 of which are encoded in the nucleus.

It localises to the plastid. The protein resides in the chloroplast thylakoid membrane. It catalyses the reaction a plastoquinone + NADH + (n+1) H(+)(in) = a plastoquinol + NAD(+) + n H(+)(out). The catalysed reaction is a plastoquinone + NADPH + (n+1) H(+)(in) = a plastoquinol + NADP(+) + n H(+)(out). In terms of biological role, NDH shuttles electrons from NAD(P)H:plastoquinone, via FMN and iron-sulfur (Fe-S) centers, to quinones in the photosynthetic chain and possibly in a chloroplast respiratory chain. The immediate electron acceptor for the enzyme in this species is believed to be plastoquinone. Couples the redox reaction to proton translocation, and thus conserves the redox energy in a proton gradient. The chain is NAD(P)H-quinone oxidoreductase subunit 5, chloroplastic (ndhF) from Draba nemorosa (Woodland whitlowgrass).